The chain runs to 275 residues: 2-dehydro-3-deoxyphosphooctonate aldolase (275 aa).

This sequence belongs to the KdsA family.

It is found in the cytoplasm. It catalyses the reaction D-arabinose 5-phosphate + phosphoenolpyruvate + H2O = 3-deoxy-alpha-D-manno-2-octulosonate-8-phosphate + phosphate. The protein operates within carbohydrate biosynthesis; 3-deoxy-D-manno-octulosonate biosynthesis; 3-deoxy-D-manno-octulosonate from D-ribulose 5-phosphate: step 2/3. It functions in the pathway bacterial outer membrane biogenesis; lipopolysaccharide biosynthesis. The chain is 2-dehydro-3-deoxyphosphooctonate aldolase from Francisella tularensis subsp. novicida (strain U112).